Consider the following 182-residue polypeptide: Peptidyl-tRNA hydrolase (182 aa).

Position 14 (Tyr14) interacts with tRNA. The Proton acceptor role is filled by His19. Residues Phe64, Asn66, and Asn112 each coordinate tRNA.

This sequence belongs to the PTH family. In terms of assembly, monomer.

Its subcellular location is the cytoplasm. The enzyme catalyses an N-acyl-L-alpha-aminoacyl-tRNA + H2O = an N-acyl-L-amino acid + a tRNA + H(+). In terms of biological role, hydrolyzes ribosome-free peptidyl-tRNAs (with 1 or more amino acids incorporated), which drop off the ribosome during protein synthesis, or as a result of ribosome stalling. Catalyzes the release of premature peptidyl moieties from peptidyl-tRNA molecules trapped in stalled 50S ribosomal subunits, and thus maintains levels of free tRNAs and 50S ribosomes. The protein is Peptidyl-tRNA hydrolase of Wolbachia pipientis wMel.